A 264-amino-acid polypeptide reads, in one-letter code: MIEVSGVSVRLSGKTIISDVAFTARAGELTAIAGPNGSGKTTTMKAISGELAYGGSVRIGGGEVKGLKPWQLAAIRGVLPQASTISFPFTVREIVRMGLTSGLNLHPDKAEQTAAAALASVDLTGFEGRFYQELSGGEQQRVQLARVLCQIAEPIVDGKPCWLLLDEPVSSLDISHQLTIMTLARNFCERGGGVIAVMHDLNLTALFADRIVLMKSGRLAAAGSIGEVLTNETMLAVFGCALRINQVPSDGTPFVLAHSAISRP.

In terms of domain architecture, ABC transporter spans 2-241; sequence IEVSGVSVRL…ETMLAVFGCA (240 aa). 34–41 serves as a coordination point for ATP; that stretch reads GPNGSGKT.

The protein belongs to the ABC transporter superfamily. Heme (hemin) importer (TC 3.A.1.14.5) family. As to quaternary structure, the complex is composed of two ATP-binding proteins (HmuV), two transmembrane proteins (HmuU) and a solute-binding protein (HmuT).

Its subcellular location is the cell inner membrane. Its function is as follows. Part of the ABC transporter complex HmuTUV involved in hemin import. Responsible for energy coupling to the transport system. The chain is Hemin import ATP-binding protein HmuV from Rhizobium johnstonii (strain DSM 114642 / LMG 32736 / 3841) (Rhizobium leguminosarum bv. viciae).